Consider the following 512-residue polypeptide: Solute carrier family 2, facilitated glucose transporter member 7 (512 aa).

Topologically, residues 1-21 are cytoplasmic; it reads MENKEAGTPPPIPSREGRLQP. A helical transmembrane segment spans residues 22–42; it reads TLLLATLSAAFGSAFQYGYNL. The Extracellular segment spans residues 43–78; that stretch reads SVVNTPHKVFKSFYNETYFERHATFMDGKLMLLLWS. N57 carries N-linked (GlcNAc...) asparagine glycosylation. A helical membrane pass occupies residues 79-99; that stretch reads CTVSMFPLGGLLGSLLVGLLV. The Cytoplasmic portion of the chain corresponds to 100 to 107; that stretch reads DSCGRKGT. The helical transmembrane segment at 108–128 threads the bilayer; sequence LLINNIFAIIPAILMGVSKVA. Topologically, residues 129-138 are extracellular; sequence KAFELIVFSR. The chain crosses the membrane as a helical span at residues 139–159; it reads VVLGVCAGISYSALPMYLGEL. Residues 160–172 lie on the Cytoplasmic side of the membrane; it reads APKNLRGMVGTMT. A helical membrane pass occupies residues 173–193; the sequence is EVFVIVGVFLAQIFSLQAILG. The Extracellular portion of the chain corresponds to 194 to 198; it reads NPAGW. The helical transmembrane segment at 199–219 threads the bilayer; sequence PVLLALTGVPALLQLLTLPFF. Residues 220–281 lie on the Cytoplasmic side of the membrane; sequence PESPRYSLIQ…LHLCALRSLR (62 aa). The chain crosses the membrane as a helical span at residues 282 to 302; the sequence is WQLLSIIVLMAGQQLSGINAI. Residues 294-295 and N300 each bind D-glucose; that span reads QQ. Over 303–321 the chain is Extracellular; sequence NYYADTIYTSAGVEAAHSQ. The helical transmembrane segment at 322–342 threads the bilayer; sequence YVTVGSGVVNIVMTITSAVLV. N331 provides a ligand contact to D-glucose. Topologically, residues 343-350 are cytoplasmic; it reads ERLGRRHL. The helical transmembrane segment at 351–371 threads the bilayer; sequence LLAGYGICGSACLVLTVVLLF. The Extracellular segment spans residues 372–379; it reads QNRVPELS. A helical membrane pass occupies residues 380–400; that stretch reads YLGIICVFAYIAGHSIGPSPV. Residues 401–415 lie on the Cytoplasmic side of the membrane; sequence PSVVRTEIFLQSSRR. The helical transmembrane segment at 416-436 threads the bilayer; the sequence is AAFMVDGAVHWLTNFIIGFLF. Residues 437–445 lie on the Extracellular side of the membrane; that stretch reads PSIQEAIGA. The chain crosses the membrane as a helical span at residues 446–466; the sequence is YSFIIFAGICLLTAIYIYVVI. Residues 467–512 lie on the Cytoplasmic side of the membrane; the sequence is PETKGKTFVEINRIFAKRNRVKLPEEKEETIDAGPPTASPAKETSF. The tract at residues 491 to 512 is disordered; sequence EEKEETIDAGPPTASPAKETSF.

It belongs to the major facilitator superfamily. Sugar transporter (TC 2.A.1.1) family. Glucose transporter subfamily. As to expression, expressed in small intestine and colon. Weakly expressed in testis and prostate.

It is found in the cell membrane. The protein localises to the apical cell membrane. The enzyme catalyses D-glucose(out) = D-glucose(in). The catalysed reaction is D-fructose(out) = D-fructose(in). Its activity is regulated as follows. Glucose and fructose transport are inhibited by the flavonoid apigenin. Functionally, probable sugar transporter. Even if its physiological substrate is subject to discussion, it is able to transport glucose and fructose. Does not transport galactose, 2-deoxy-d-glucose and xylose. The polypeptide is Solute carrier family 2, facilitated glucose transporter member 7 (Homo sapiens (Human)).